The sequence spans 200 residues: Lipopolysaccharide core heptose(II)-phosphate phosphatase (200 aa).

Positions 1-25 (MLAFCRSSLKSKKYFIILLALAAIA) are cleaved as a signal peptide.

Belongs to the phosphoglycerate mutase family. Ais subfamily.

The protein resides in the periplasm. It participates in bacterial outer membrane biogenesis; lipopolysaccharide metabolism. Its function is as follows. Catalyzes the dephosphorylation of heptose(II) of the outer membrane lipopolysaccharide core. This Shigella flexneri serotype 5b (strain 8401) protein is Lipopolysaccharide core heptose(II)-phosphate phosphatase.